A 474-amino-acid polypeptide reads, in one-letter code: MAKEISSELLNTILTRVGGPGNIASCGNCMTRLRLGVHDSSLVDPNIKTLEGVKGVILTSDQVQVVFGPGKAHRATKAMSELLGEAPVQDAAEIAAQNKRQLKAKQTSGVQQFLAKFATIFTPLIPGFIAAGLLLGIATLIATVMHVPADAQGTLPDALNFMKVFSKGLFTFLVILVGYNAAQAFGGTGVNGAIIAALFLLGYNPAATTGYYAGFHDFFGLPIDPRGNIIGVLIAAWACARIEGMVRRFMPDDLDMLLTSLITLLITATLAYLIIMPLGGWLFEGMSWLFMHLNSNPLGCAVLAGLFLIAVVFGVHQGFIPVYLALMDSQGFNSLFPILSMAGAGQVGAALALYWRAQPHSGLRSQVRGAIIPGLLGVGEPLIYGVTLPRMKPFITACLGGAAGGLFIGLIAWWGLPMGLNSAFGPSGLVALPLMTSAQGILPAMAIYAGGILVAWVCGFIFTTLFGCRNVNLD.

Residues methionine 1–glutamine 89 enclose the PTS EIIB type-1 domain. Topologically, residues methionine 1–proline 123 are cytoplasmic. Cysteine 29 serves as the catalytic Phosphocysteine intermediate; for EIIB activity. Residues alanine 115 to aspartate 474 enclose the PTS EIIC type-1 domain. A helical transmembrane segment spans residues leucine 124–valine 144. Over methionine 145–aspartate 157 the chain is Periplasmic. The helical transmembrane segment at alanine 158–glycine 178 threads the bilayer. The Cytoplasmic portion of the chain corresponds to tyrosine 179–asparagine 180. Residues alanine 181–leucine 201 traverse the membrane as a helical segment. Residues glycine 202 to aspartate 217 are Periplasmic-facing. The helical transmembrane segment at phenylalanine 218 to alanine 238 threads the bilayer. Topologically, residues cysteine 239–serine 260 are cytoplasmic. The helical transmembrane segment at leucine 261–tryptophan 281 threads the bilayer. The Periplasmic segment spans residues leucine 282–alanine 301. The helical transmembrane segment at valine 302–valine 322 threads the bilayer. The Cytoplasmic segment spans residues tyrosine 323–serine 334. A helical transmembrane segment spans residues leucine 335–tryptophan 355. Residues arginine 356–arginine 368 are Periplasmic-facing. A helical transmembrane segment spans residues glycine 369–proline 389. At arginine 390–proline 393 the chain is on the cytoplasmic side. Residues phenylalanine 394–tryptophan 414 form a helical membrane-spanning segment. Residues glycine 415–glycine 440 lie on the Periplasmic side of the membrane. The helical transmembrane segment at isoleucine 441–isoleucine 461 threads the bilayer. The Cytoplasmic portion of the chain corresponds to phenylalanine 462–aspartate 474.

The protein localises to the cell inner membrane. The catalysed reaction is N-acetyl-beta-D-muramate(out) + N(pros)-phospho-L-histidyl-[protein] = N-acetyl-beta-D-muramate 6-phosphate(in) + L-histidyl-[protein]. Its function is as follows. The phosphoenolpyruvate-dependent sugar phosphotransferase system (sugar PTS), a major carbohydrate active transport system, catalyzes the phosphorylation of incoming sugar substrates concomitantly with their translocation across the cell membrane. This system is involved in N-acetylmuramic acid (MurNAc) transport, yielding cytoplasmic MurNAc-6-P. Is also able to take up anhydro-N-acetylmuramic acid (anhMurNAc), but cannot phosphorylate the carbon 6, probably because of the 1,6-anhydro ring. In Shigella dysenteriae serotype 1 (strain Sd197), this protein is PTS system N-acetylmuramic acid-specific EIIBC component (murP).